The primary structure comprises 72 residues: ATP synthase protein 8 (72 aa).

A helical membrane pass occupies residues 16 to 36 (WTLIALFLLFSFLVVSVLPAV).

It belongs to the ATPase protein 8 family. In terms of assembly, F-type ATPases have 2 components, CF(1) - the catalytic core - and CF(0) - the membrane proton channel.

Its subcellular location is the mitochondrion membrane. Functionally, mitochondrial membrane ATP synthase (F(1)F(0) ATP synthase or Complex V) produces ATP from ADP in the presence of a proton gradient across the membrane which is generated by electron transport complexes of the respiratory chain. F-type ATPases consist of two structural domains, F(1) - containing the extramembraneous catalytic core and F(0) - containing the membrane proton channel, linked together by a central stalk and a peripheral stalk. During catalysis, ATP synthesis in the catalytic domain of F(1) is coupled via a rotary mechanism of the central stalk subunits to proton translocation. Part of the complex F(0) domain. Minor subunit located with subunit a in the membrane. The protein is ATP synthase protein 8 (MTATP8) of Metridium senile (Brown sea anemone).